The following is a 181-amino-acid chain: Adenylyl-sulfate kinase (181 aa).

12-19 (GLSGAGKS) serves as a coordination point for ATP. Ser86 (phosphoserine intermediate) is an active-site residue.

It belongs to the APS kinase family.

The catalysed reaction is adenosine 5'-phosphosulfate + ATP = 3'-phosphoadenylyl sulfate + ADP + H(+). It functions in the pathway sulfur metabolism; hydrogen sulfide biosynthesis; sulfite from sulfate: step 2/3. In terms of biological role, catalyzes the synthesis of activated sulfate. The protein is Adenylyl-sulfate kinase of Microcystis aeruginosa (strain NIES-843 / IAM M-2473).